Here is a 312-residue protein sequence, read N- to C-terminus: Glutathione synthetase (312 aa).

In terms of domain architecture, ATP-grasp spans 125 to 309 (KIFVTEFPDL…IAALFWDAVE (185 aa)). 151–207 (RREFGDIILKPLYGNGGAGVFHLADGDRNLTSLLEMFGQLFREPFIAQRYLKDVRAG) lines the ATP pocket. Mg(2+) is bound by residues E280 and N282.

This sequence belongs to the prokaryotic GSH synthase family. Mg(2+) serves as cofactor. The cofactor is Mn(2+).

It carries out the reaction gamma-L-glutamyl-L-cysteine + glycine + ATP = glutathione + ADP + phosphate + H(+). It participates in sulfur metabolism; glutathione biosynthesis; glutathione from L-cysteine and L-glutamate: step 2/2. The polypeptide is Glutathione synthetase (Brucella melitensis biotype 1 (strain ATCC 23456 / CCUG 17765 / NCTC 10094 / 16M)).